We begin with the raw amino-acid sequence, 377 residues long: Ribosomal RNA large subunit methyltransferase G (377 aa).

Belongs to the methyltransferase superfamily. RlmG family.

The protein localises to the cytoplasm. It catalyses the reaction guanosine(1835) in 23S rRNA + S-adenosyl-L-methionine = N(2)-methylguanosine(1835) in 23S rRNA + S-adenosyl-L-homocysteine + H(+). Functionally, specifically methylates the guanine in position 1835 (m2G1835) of 23S rRNA. This chain is Ribosomal RNA large subunit methyltransferase G, found in Streptomyces coelicolor (strain ATCC BAA-471 / A3(2) / M145).